A 96-amino-acid chain; its full sequence is Aspartyl/glutamyl-tRNA(Asn/Gln) amidotransferase subunit C (96 aa).

A disordered region spans residues 64-96 (REDEPEPGLPREEVLKNAPDQQDGQFRVPAILE).

Belongs to the GatC family. In terms of assembly, heterotrimer of A, B and C subunits.

It carries out the reaction L-glutamyl-tRNA(Gln) + L-glutamine + ATP + H2O = L-glutaminyl-tRNA(Gln) + L-glutamate + ADP + phosphate + H(+). It catalyses the reaction L-aspartyl-tRNA(Asn) + L-glutamine + ATP + H2O = L-asparaginyl-tRNA(Asn) + L-glutamate + ADP + phosphate + 2 H(+). Its function is as follows. Allows the formation of correctly charged Asn-tRNA(Asn) or Gln-tRNA(Gln) through the transamidation of misacylated Asp-tRNA(Asn) or Glu-tRNA(Gln) in organisms which lack either or both of asparaginyl-tRNA or glutaminyl-tRNA synthetases. The reaction takes place in the presence of glutamine and ATP through an activated phospho-Asp-tRNA(Asn) or phospho-Glu-tRNA(Gln). This is Aspartyl/glutamyl-tRNA(Asn/Gln) amidotransferase subunit C from Geobacillus thermodenitrificans (strain NG80-2).